The following is a 133-amino-acid chain: Putative biopolymer transport protein ExbD-like 2 (133 aa).

Residues 1–9 (MKKVESMNV) are Cytoplasmic-facing. The helical transmembrane segment at 10–30 (VPFIDIMLVLLVIVLTTASFV) threads the bilayer. At 31 to 133 (QTSKLPISIP…LVEDKKNQKN (103 aa)) the chain is on the periplasmic side.

Belongs to the ExbD/TolR family.

Its subcellular location is the cell inner membrane. The chain is Putative biopolymer transport protein ExbD-like 2 from Helicobacter pylori (strain J99 / ATCC 700824) (Campylobacter pylori J99).